Reading from the N-terminus, the 250-residue chain is MAAPTVSMQALLDAGAHFGHQTHRWNPKMKPYLFGDRNGIHIIDLSQTVPLMARALDLISQTVQHGGKVLFVGTKRQAQEPIAEAARRSGQHYVNHRWLGGMLTNWKTISNSIKRFKALEEQLSGDTHGLTKKEVLQLTRERDKFELSLGGIRDMGGIPDVMFVIDANKEELAIKEANTLGIPVVAILDSNVSPDGIAFPVPANDDAARAIRLYCEAVAEAATRGAQGGRQARGEDLGAAVEAPSEDALA.

A disordered region spans residues 225–250 (GAQGGRQARGEDLGAAVEAPSEDALA).

Belongs to the universal ribosomal protein uS2 family.

The polypeptide is Small ribosomal subunit protein uS2 (Rhizorhabdus wittichii (strain DSM 6014 / CCUG 31198 / JCM 15750 / NBRC 105917 / EY 4224 / RW1) (Sphingomonas wittichii)).